Here is a 112-residue protein sequence, read N- to C-terminus: Large ribosomal subunit protein uL24 (112 aa).

A disordered region spans residues 92–112 (ERDGKQKTVRVRVSKSTGKDL).

It belongs to the universal ribosomal protein uL24 family. As to quaternary structure, part of the 50S ribosomal subunit.

One of two assembly initiator proteins, it binds directly to the 5'-end of the 23S rRNA, where it nucleates assembly of the 50S subunit. In terms of biological role, one of the proteins that surrounds the polypeptide exit tunnel on the outside of the subunit. This Kocuria rhizophila (strain ATCC 9341 / DSM 348 / NBRC 103217 / DC2201) protein is Large ribosomal subunit protein uL24.